The following is a 181-amino-acid chain: Adenine phosphoribosyltransferase (181 aa).

It belongs to the purine/pyrimidine phosphoribosyltransferase family. In terms of assembly, homodimer.

Its subcellular location is the cytoplasm. It catalyses the reaction AMP + diphosphate = 5-phospho-alpha-D-ribose 1-diphosphate + adenine. The protein operates within purine metabolism; AMP biosynthesis via salvage pathway; AMP from adenine: step 1/1. In terms of biological role, catalyzes a salvage reaction resulting in the formation of AMP, that is energically less costly than de novo synthesis. The sequence is that of Adenine phosphoribosyltransferase from Rhodopseudomonas palustris (strain HaA2).